The sequence spans 241 residues: Aquaporin Z 1 (241 aa).

A helical membrane pass occupies residues 23-43 (AVFAAAFPELGIGFLGVAFAF). Residues 63-65 (NPA) carry the NPA 1 motif. Transmembrane regions (helical) follow at residues 85–105 (IVAQ…ILTG), 129–149 (LLSA…VILG), and 156–176 (PVGF…LISI). The NPA 2 motif lies at 184–186 (NPA). A helical transmembrane segment spans residues 204 to 224 (WLFWLAPILGGAIGAVVWKIF).

Belongs to the MIP/aquaporin (TC 1.A.8) family. Homotetramer.

It localises to the cell inner membrane. It carries out the reaction H2O(in) = H2O(out). In terms of biological role, channel that permits osmotically driven movement of water in both directions. It is involved in the osmoregulation and in the maintenance of cell turgor during volume expansion in rapidly growing cells. It mediates rapid entry or exit of water in response to abrupt changes in osmolarity. This Agrobacterium fabrum (strain C58 / ATCC 33970) (Agrobacterium tumefaciens (strain C58)) protein is Aquaporin Z 1.